We begin with the raw amino-acid sequence, 300 residues long: 4-hydroxy-tetrahydrodipicolinate synthase (300 aa).

Residue threonine 57 coordinates pyruvate. Residue tyrosine 145 is the Proton donor/acceptor of the active site. The active-site Schiff-base intermediate with substrate is lysine 173. Isoleucine 213 is a binding site for pyruvate.

The protein belongs to the DapA family. As to quaternary structure, homotetramer; dimer of dimers.

It is found in the cytoplasm. It catalyses the reaction L-aspartate 4-semialdehyde + pyruvate = (2S,4S)-4-hydroxy-2,3,4,5-tetrahydrodipicolinate + H2O + H(+). It functions in the pathway amino-acid biosynthesis; L-lysine biosynthesis via DAP pathway; (S)-tetrahydrodipicolinate from L-aspartate: step 3/4. Catalyzes the condensation of (S)-aspartate-beta-semialdehyde [(S)-ASA] and pyruvate to 4-hydroxy-tetrahydrodipicolinate (HTPA). The chain is 4-hydroxy-tetrahydrodipicolinate synthase from Corynebacterium urealyticum (strain ATCC 43042 / DSM 7109).